The sequence spans 192 residues: 7-methyl-GTP pyrophosphatase (192 aa).

The active-site Proton acceptor is the Asp-69.

Belongs to the Maf family. YceF subfamily. Requires a divalent metal cation as cofactor.

Its subcellular location is the cytoplasm. The catalysed reaction is N(7)-methyl-GTP + H2O = N(7)-methyl-GMP + diphosphate + H(+). Nucleoside triphosphate pyrophosphatase that hydrolyzes 7-methyl-GTP (m(7)GTP). May have a dual role in cell division arrest and in preventing the incorporation of modified nucleotides into cellular nucleic acids. The protein is 7-methyl-GTP pyrophosphatase of Pseudomonas aeruginosa (strain ATCC 15692 / DSM 22644 / CIP 104116 / JCM 14847 / LMG 12228 / 1C / PRS 101 / PAO1).